The primary structure comprises 226 residues: UPF0758 protein M6_Spy0838 (226 aa).

An MPN domain is found at 103–225 (SVLTSVQVAE…YYSFREKSTL (123 aa)). His174, His176, and Asp187 together coordinate Zn(2+). The short motif at 174–187 (HNHPSGNIEPSSND) is the JAMM motif element.

Belongs to the UPF0758 family.

This is UPF0758 protein M6_Spy0838 from Streptococcus pyogenes serotype M6 (strain ATCC BAA-946 / MGAS10394).